A 108-amino-acid chain; its full sequence is Urease subunit beta (108 aa).

This sequence belongs to the urease beta subunit family. Heterotrimer of UreA (gamma), UreB (beta) and UreC (alpha) subunits. Three heterotrimers associate to form the active enzyme.

It is found in the cytoplasm. It carries out the reaction urea + 2 H2O + H(+) = hydrogencarbonate + 2 NH4(+). The protein operates within nitrogen metabolism; urea degradation; CO(2) and NH(3) from urea (urease route): step 1/1. The sequence is that of Urease subunit beta from Chromohalobacter salexigens (strain ATCC BAA-138 / DSM 3043 / CIP 106854 / NCIMB 13768 / 1H11).